The following is a 207-amino-acid chain: Guanylate kinase (207 aa).

The Guanylate kinase-like domain maps to 4–184 (GILFIISAPS…AINDLRTIII (181 aa)). 11–18 (APSGTGKS) is an ATP binding site.

The protein belongs to the guanylate kinase family.

It is found in the cytoplasm. It carries out the reaction GMP + ATP = GDP + ADP. Functionally, essential for recycling GMP and indirectly, cGMP. This Buchnera aphidicola subsp. Schizaphis graminum (strain Sg) protein is Guanylate kinase.